A 97-amino-acid polypeptide reads, in one-letter code: Conotoxin Cal6.1a (97 aa).

A signal peptide spans 1–22; that stretch reads MKLTTVLVVALLVLAACQFTVT. The segment at 23-46 is disordered; that stretch reads DNSGDDPENPSLRSVGENQNPDST. A propeptide spanning residues 23–68 is cleaved from the precursor; sequence DNSGDDPENPSLRSVGENQNPDSTKTITAWATRDMTNMRRGLNRPS. Disulfide bonds link Cys-71–Cys-87, Cys-78–Cys-91, and Cys-86–Cys-96.

It belongs to the conotoxin O1 superfamily. As to expression, expressed by the venom duct.

Its subcellular location is the secreted. Functionally, probable neurotoxin with unknown target. Possibly targets ion channels. This Californiconus californicus (California cone) protein is Conotoxin Cal6.1a.